The chain runs to 459 residues: Cysteine--tRNA ligase (459 aa).

A Zn(2+)-binding site is contributed by C28. Residues I30 to H40 carry the 'HIGH' region motif. Positions 209, 234, and 238 each coordinate Zn(2+). A 'KMSKS' region motif is present at residues K266 to S270. K269 contacts ATP.

Belongs to the class-I aminoacyl-tRNA synthetase family. As to quaternary structure, monomer. It depends on Zn(2+) as a cofactor.

It localises to the cytoplasm. The catalysed reaction is tRNA(Cys) + L-cysteine + ATP = L-cysteinyl-tRNA(Cys) + AMP + diphosphate. This chain is Cysteine--tRNA ligase, found in Shewanella sediminis (strain HAW-EB3).